A 458-amino-acid chain; its full sequence is ATP synthase subunit beta (458 aa).

Position 148–155 (148–155) interacts with ATP; it reads GGAGVGKT.

It belongs to the ATPase alpha/beta chains family. F-type ATPases have 2 components, CF(1) - the catalytic core - and CF(0) - the membrane proton channel. CF(1) has five subunits: alpha(3), beta(3), gamma(1), delta(1), epsilon(1). CF(0) has three main subunits: a(1), b(2) and c(9-12). The alpha and beta chains form an alternating ring which encloses part of the gamma chain. CF(1) is attached to CF(0) by a central stalk formed by the gamma and epsilon chains, while a peripheral stalk is formed by the delta and b chains.

The protein resides in the cell inner membrane. The enzyme catalyses ATP + H2O + 4 H(+)(in) = ADP + phosphate + 5 H(+)(out). Functionally, produces ATP from ADP in the presence of a proton gradient across the membrane. The catalytic sites are hosted primarily by the beta subunits. This chain is ATP synthase subunit beta, found in Francisella tularensis subsp. novicida (strain U112).